Here is a 127-residue protein sequence, read N- to C-terminus: UPF0102 protein Gura_3756 (127 aa).

This sequence belongs to the UPF0102 family.

This Geotalea uraniireducens (strain Rf4) (Geobacter uraniireducens) protein is UPF0102 protein Gura_3756.